A 747-amino-acid chain; its full sequence is Homeobox-leucine zipper protein GLABRA 2 (747 aa).

Residues R31–Q112 form a disordered region. The span at E58–R68 shows a compositional bias: polar residues. Over residues E73–G90 the composition is skewed to acidic residues. The span at T97–R107 shows a compositional bias: basic residues. A DNA-binding region (homeobox) is located at residues K101–Q160. Residues Q155–R223 are a coiled coil. Residues F250 to F489 enclose the START domain.

This sequence belongs to the HD-ZIP homeobox family. Class IV subfamily. Interacts with GIR1 and GIR2. As to expression, expressed in individual developing trichome cells of the emerging leaf primordia. Expressed in differentiating hairless cells of root epidermis.

The protein resides in the nucleus. Its function is as follows. Transcription factor involved in the determination of epidermal cell identity. Required for correct morphological development and maturation of trichomes. Regulates the frequency of trichome initiation and determines trichome spacing. Acts as a negative factor for root hair development. Required for ectopic repression of root hair development in a subset of epidermal cells. May suppress hair formation in root epidermis by promoting differentiation into hairless epidermal cells. Directly suppresses the bHLH transcription factor genes, RHD6, RSL1, RSL2, LRL1, and LRL2, which have diverse functions in root hair development. Required for normal development of seed coat mucilage. Involved in the control of seed oil accumulation. Acts as a negative regulator of anthocyanin biosynthesis. May directly repress the expression of some component genes from the MYB-bHLH-WD40 (MBW) transcriptional activator complex. The MBW complex activates the transcription of late biosynthesis genes in the flavonoid pathway, leading to the production of anthocyanins. The chain is Homeobox-leucine zipper protein GLABRA 2 from Arabidopsis thaliana (Mouse-ear cress).